The sequence spans 488 residues: Tyrosine-protein kinase Srms (488 aa).

The SH3 domain occupies 51–112 (PFPQLFLALY…PITHVAKASP (62 aa)). The 93-residue stretch at 120–212 (WYFSGVSRTQ…LIQNPLLQPC (93 aa)) folds into the SH2 domain. A Protein kinase domain is found at 230 to 488 (FALGRKLGEG…KLHAIHRCHP (259 aa)). Residues 236–244 (LGEGYFGEV) and K258 contribute to the ATP site. The active-site Proton acceptor is D350. Y380 carries the phosphotyrosine; by autocatalysis modification.

It belongs to the protein kinase superfamily. Tyr protein kinase family. SRC subfamily. In terms of assembly, interacts (via the SH2 and SH3 domains) with DOK1. Interacts with KHDRBS1/SAM68 and VIM. As to expression, highly expressed in most breast cancers (at protein level).

It localises to the cytoplasm. It catalyses the reaction L-tyrosyl-[protein] + ATP = O-phospho-L-tyrosyl-[protein] + ADP + H(+). In terms of biological role, non-receptor tyrosine-protein kinase which phosphorylates DOK1 on tyrosine residues. Also phosphorylates KHDRBS1/SAM68 and VIM on tyrosine residues. Phosphorylation of KHDRBS1 is EGF-dependent. Phosphorylates OTUB1, promoting deubiquitination of RPTOR. In Homo sapiens (Human), this protein is Tyrosine-protein kinase Srms (SRMS).